The chain runs to 286 residues: Phosphatidylserine decarboxylase proenzyme (286 aa).

Residues D91, H148, and S251 each act as charge relay system; for autoendoproteolytic cleavage activity in the active site. The active-site Schiff-base intermediate with substrate; via pyruvic acid; for decarboxylase activity is S251. Position 251 is a pyruvic acid (Ser); by autocatalysis (S251).

This sequence belongs to the phosphatidylserine decarboxylase family. PSD-B subfamily. Prokaryotic type I sub-subfamily. Heterodimer of a large membrane-associated beta subunit and a small pyruvoyl-containing alpha subunit. Requires pyruvate as cofactor. Post-translationally, is synthesized initially as an inactive proenzyme. Formation of the active enzyme involves a self-maturation process in which the active site pyruvoyl group is generated from an internal serine residue via an autocatalytic post-translational modification. Two non-identical subunits are generated from the proenzyme in this reaction, and the pyruvate is formed at the N-terminus of the alpha chain, which is derived from the carboxyl end of the proenzyme. The autoendoproteolytic cleavage occurs by a canonical serine protease mechanism, in which the side chain hydroxyl group of the serine supplies its oxygen atom to form the C-terminus of the beta chain, while the remainder of the serine residue undergoes an oxidative deamination to produce ammonia and the pyruvoyl prosthetic group on the alpha chain. During this reaction, the Ser that is part of the protease active site of the proenzyme becomes the pyruvoyl prosthetic group, which constitutes an essential element of the active site of the mature decarboxylase.

It localises to the cell membrane. The enzyme catalyses a 1,2-diacyl-sn-glycero-3-phospho-L-serine + H(+) = a 1,2-diacyl-sn-glycero-3-phosphoethanolamine + CO2. The protein operates within phospholipid metabolism; phosphatidylethanolamine biosynthesis; phosphatidylethanolamine from CDP-diacylglycerol: step 2/2. In terms of biological role, catalyzes the formation of phosphatidylethanolamine (PtdEtn) from phosphatidylserine (PtdSer). This chain is Phosphatidylserine decarboxylase proenzyme, found in Marinobacter nauticus (strain ATCC 700491 / DSM 11845 / VT8) (Marinobacter aquaeolei).